The primary structure comprises 372 residues: Glutamate 5-kinase (372 aa).

Position 14 (K14) interacts with ATP. The substrate site is built by S54, D141, and N153. 173-174 (TD) is an ATP binding site. In terms of domain architecture, PUA spans 280–358 (RGHVVIDAGA…GEIETVLGYM (79 aa)).

This sequence belongs to the glutamate 5-kinase family.

It is found in the cytoplasm. It catalyses the reaction L-glutamate + ATP = L-glutamyl 5-phosphate + ADP. It functions in the pathway amino-acid biosynthesis; L-proline biosynthesis; L-glutamate 5-semialdehyde from L-glutamate: step 1/2. Catalyzes the transfer of a phosphate group to glutamate to form L-glutamate 5-phosphate. This Burkholderia orbicola (strain AU 1054) protein is Glutamate 5-kinase.